A 104-amino-acid chain; its full sequence is Large ribosomal subunit protein bL21 (104 aa).

Belongs to the bacterial ribosomal protein bL21 family. As to quaternary structure, part of the 50S ribosomal subunit. Contacts protein L20.

Functionally, this protein binds to 23S rRNA in the presence of protein L20. This Salinispora tropica (strain ATCC BAA-916 / DSM 44818 / JCM 13857 / NBRC 105044 / CNB-440) protein is Large ribosomal subunit protein bL21.